The chain runs to 486 residues: Surface lipoprotein assembly modifier (486 aa).

The signal sequence occupies residues Met1–Ala29. The interval Lys30–Asn197 is N-terminal domain. The C-terminal probable beta barrel stretch occupies residues Gln198–Phe486. 14 beta stranded membrane-spanning segments follow: residues Trp199–Asn209, Gly237–Pro248, Phe253–Asn262, Thr276–Gln286, Val290–Lys300, Leu320–Leu330, Trp334–Glu344, Tyr358–Leu367, Phe373–Arg382, Lys395–Asp404, Ile409–Asn419, Tyr437–Arg446, Leu453–Lys463, and Asn476–Phe486.

The protein belongs to the Slam family.

The protein localises to the cell outer membrane. Required for correct export to the cell surface of some cell outer membrane lipoproteins (tested with TpbP) upon heterologous expression in E.coli and probably also in Haemophilus. This is Surface lipoprotein assembly modifier from Haemophilus influenzae (strain 86-028NP).